We begin with the raw amino-acid sequence, 315 residues long: Methionyl-tRNA formyltransferase (315 aa).

113 to 116 contributes to the (6S)-5,6,7,8-tetrahydrofolate binding site; that stretch reads SLLP.

The protein belongs to the Fmt family.

It catalyses the reaction L-methionyl-tRNA(fMet) + (6R)-10-formyltetrahydrofolate = N-formyl-L-methionyl-tRNA(fMet) + (6S)-5,6,7,8-tetrahydrofolate + H(+). Attaches a formyl group to the free amino group of methionyl-tRNA(fMet). The formyl group appears to play a dual role in the initiator identity of N-formylmethionyl-tRNA by promoting its recognition by IF2 and preventing the misappropriation of this tRNA by the elongation apparatus. This chain is Methionyl-tRNA formyltransferase, found in Escherichia coli O139:H28 (strain E24377A / ETEC).